Consider the following 203-residue polypeptide: Outer-membrane lipoprotein carrier protein (203 aa).

Residues 1–21 (MKKLLVACCLLSGFASTSVLA) form the signal peptide.

Belongs to the LolA family. As to quaternary structure, monomer.

Its subcellular location is the periplasm. Participates in the translocation of lipoproteins from the inner membrane to the outer membrane. Only forms a complex with a lipoprotein if the residue after the N-terminal Cys is not an aspartate (The Asp acts as a targeting signal to indicate that the lipoprotein should stay in the inner membrane). The protein is Outer-membrane lipoprotein carrier protein of Serratia proteamaculans (strain 568).